A 438-amino-acid polypeptide reads, in one-letter code: uncharacterized protein (438 aa).

Lysine 273 is subject to N6-(pyridoxal phosphate)lysine.

The protein belongs to the class-III pyridoxal-phosphate-dependent aminotransferase family. Pyridoxal 5'-phosphate serves as cofactor.

Its subcellular location is the mitochondrion. This is an uncharacterized protein from Schizosaccharomyces pombe (strain 972 / ATCC 24843) (Fission yeast).